The primary structure comprises 670 residues: Probable Na(+)/H(+) antiporter nhx-3 (670 aa).

The next 8 membrane-spanning stretches (helical) occupy residues 41-61 (VYVI…FNLM), 73-93 (LLII…LSGV), 97-117 (SHAF…YFMP), 129-149 (LVFS…SLLI), 164-184 (EILV…IAIF), 192-212 (FLFI…VVLY), 235-255 (GLSF…FAIA), and 268-288 (ILAP…AEMV). Residue Asn-310 is glycosylated (N-linked (GlcNAc...) asparagine). The next 4 membrane-spanning stretches (helical) occupy residues 325-345 (MLAQ…TLTS), 351-371 (FIFI…GIIV), 390-410 (FILS…VSIP), and 418-438 (MFIT…GITI). The segment at 648-670 (GDLKGHCGTSRKPKHSMFELRHV) is disordered.

Belongs to the monovalent cation:proton antiporter 1 (CPA1) transporter (TC 2.A.36) family. Post-translationally, phosphorylated. As to expression, expressed in hypodermal cells of the main body syncytium, ut1 cells of the vulva and the spermathecal junction cell.

The protein localises to the endomembrane system. Plays a role in epithelial membrane transport processes. In Caenorhabditis elegans, this protein is Probable Na(+)/H(+) antiporter nhx-3 (nhx-3).